The sequence spans 728 residues: Golgin subfamily A member 5 (728 aa).

Serine 2 carries the post-translational modification N-acetylserine. Residues 2 to 695 (SWFADLAGRA…IFLRRYPIAR (694 aa)) are Cytoplasmic-facing. A dimethylated arginine mark is found at arginine 27 and arginine 89. Positions 88–202 (SRTGGDASHP…KKSTEESTVS (115 aa)) are disordered. Serine 116 bears the Phosphoserine mark. Over residues 134-146 (PTGRVEIKKEKGK) the composition is skewed to basic and acidic residues. Residues 152 to 167 (SSQSSAVSSVTTSVTT) are compositionally biased toward low complexity. A compositionally biased stretch (polar residues) spans 173–187 (ENSGSQSPEVSSSDS). Residues 216 to 628 (GSMSHELSNL…LEQQLHSAAT (413 aa)) are a coiled coil. A helical; Anchor for type IV membrane protein membrane pass occupies residues 696-716 (VFVIIYMALLHLWVMIVLLTY). The Lumenal segment spans residues 717–728 (SPEMHHDQPYGK).

In terms of assembly, homodimer. Interacts with RAB1A that has been activated by GTP-binding. Interacts with isoform CASP of CUX1. Highly phosphorylated during mitosis. Phosphorylation is barely detectable during interphase.

It is found in the golgi apparatus membrane. In terms of biological role, involved in maintaining Golgi structure. Stimulates the formation of Golgi stacks and ribbons. Involved in intra-Golgi retrograde transport. The protein is Golgin subfamily A member 5 (Golga5) of Rattus norvegicus (Rat).